The following is a 249-amino-acid chain: Enolase-phosphatase E1 (249 aa).

Residues Asp14 and Glu16 each coordinate Mg(2+). Substrate contacts are provided by residues Ser141–Ser142 and Lys175. Asp200 contributes to the Mg(2+) binding site.

The protein belongs to the HAD-like hydrolase superfamily. MasA/MtnC family. Monomer. It depends on Mg(2+) as a cofactor.

It localises to the cytoplasm. The protein resides in the nucleus. The enzyme catalyses 5-methylsulfanyl-2,3-dioxopentyl phosphate + H2O = 1,2-dihydroxy-5-(methylsulfanyl)pent-1-en-3-one + phosphate. The protein operates within amino-acid biosynthesis; L-methionine biosynthesis via salvage pathway; L-methionine from S-methyl-5-thio-alpha-D-ribose 1-phosphate: step 3/6. It functions in the pathway amino-acid biosynthesis; L-methionine biosynthesis via salvage pathway; L-methionine from S-methyl-5-thio-alpha-D-ribose 1-phosphate: step 4/6. Its function is as follows. Bifunctional enzyme that catalyzes the enolization of 2,3-diketo-5-methylthiopentyl-1-phosphate (DK-MTP-1-P) into the intermediate 2-hydroxy-3-keto-5-methylthiopentenyl-1-phosphate (HK-MTPenyl-1-P), which is then dephosphorylated to form the acireductone 1,2-dihydroxy-3-keto-5-methylthiopentene (DHK-MTPene). This chain is Enolase-phosphatase E1, found in Drosophila mojavensis (Fruit fly).